We begin with the raw amino-acid sequence, 578 residues long: Proline--tRNA ligase (578 aa).

This sequence belongs to the class-II aminoacyl-tRNA synthetase family. ProS type 1 subfamily. Homodimer.

Its subcellular location is the cytoplasm. The enzyme catalyses tRNA(Pro) + L-proline + ATP = L-prolyl-tRNA(Pro) + AMP + diphosphate. Its function is as follows. Catalyzes the attachment of proline to tRNA(Pro) in a two-step reaction: proline is first activated by ATP to form Pro-AMP and then transferred to the acceptor end of tRNA(Pro). As ProRS can inadvertently accommodate and process non-cognate amino acids such as alanine and cysteine, to avoid such errors it has two additional distinct editing activities against alanine. One activity is designated as 'pretransfer' editing and involves the tRNA(Pro)-independent hydrolysis of activated Ala-AMP. The other activity is designated 'posttransfer' editing and involves deacylation of mischarged Ala-tRNA(Pro). The misacylated Cys-tRNA(Pro) is not edited by ProRS. The polypeptide is Proline--tRNA ligase (Burkholderia cenocepacia (strain HI2424)).